Consider the following 186-residue polypeptide: Elongation factor P (186 aa).

Belongs to the elongation factor P family.

It localises to the cytoplasm. The protein operates within protein biosynthesis; polypeptide chain elongation. In terms of biological role, involved in peptide bond synthesis. Stimulates efficient translation and peptide-bond synthesis on native or reconstituted 70S ribosomes in vitro. Probably functions indirectly by altering the affinity of the ribosome for aminoacyl-tRNA, thus increasing their reactivity as acceptors for peptidyl transferase. The chain is Elongation factor P from Shewanella sp. (strain ANA-3).